The following is a 300-amino-acid chain: Putative S-adenosyl-L-methionine-dependent methyltransferase MAB_4328c (300 aa).

S-adenosyl-L-methionine is bound by residues D126 and 155-156 (DL).

The protein belongs to the UPF0677 family.

Its function is as follows. Exhibits S-adenosyl-L-methionine-dependent methyltransferase activity. In Mycobacteroides abscessus (strain ATCC 19977 / DSM 44196 / CCUG 20993 / CIP 104536 / JCM 13569 / NCTC 13031 / TMC 1543 / L948) (Mycobacterium abscessus), this protein is Putative S-adenosyl-L-methionine-dependent methyltransferase MAB_4328c.